We begin with the raw amino-acid sequence, 338 residues long: Cytochrome c biogenesis protein CcsA (338 aa).

Helical transmembrane passes span 15 to 35 (FLVLFLTMLLYWGGAAFPNIP), 36 to 56 (GLTGLGTLGVAIANLCMATLL), 71 to 91 (LYESLFFLAWGVTTMHLVAEW), 97 to 117 (WVGVITAPVAMGITAFAALSL), 142 to 162 (VMMISYAALLVGSLLAIAFLI), 246 to 266 (IIGLGFPLLTIGIIAGAVWAN), 273 to 293 (WSWDPKETWALITWLVFAAYL), and 307 to 327 (AFLAAAGFFVVWVCYLGVNIL).

The protein belongs to the CcmF/CycK/Ccl1/NrfE/CcsA family. May interact with ccs1.

The protein resides in the cellular thylakoid membrane. Required during biogenesis of c-type cytochromes (cytochrome c6 and cytochrome f) at the step of heme attachment. The protein is Cytochrome c biogenesis protein CcsA of Picosynechococcus sp. (strain ATCC 27264 / PCC 7002 / PR-6) (Agmenellum quadruplicatum).